A 70-amino-acid polypeptide reads, in one-letter code: Probable protein transport protein Sec61 subunit gamma (70 aa).

Residues M1–Q39 are Cytoplasmic-facing. The helical transmembrane segment at A40–I58 threads the bilayer. Topologically, residues H59 to A70 are extracellular.

This sequence belongs to the SecE/SEC61-gamma family. As to quaternary structure, heterotrimeric complex composed of SEC61-alpha, SEC61-beta and SEC61-gamma.

It localises to the endoplasmic reticulum membrane. Functionally, necessary for protein translocation in the endoplasmic reticulum. This chain is Probable protein transport protein Sec61 subunit gamma, found in Neurospora crassa (strain ATCC 24698 / 74-OR23-1A / CBS 708.71 / DSM 1257 / FGSC 987).